A 219-amino-acid polypeptide reads, in one-letter code: Large ribosomal subunit protein bL25 (219 aa).

The segment at 188–219 (TVAAPADTAVQPESSSTKGKKDEDGALAKDKK) is disordered. The segment covering 206 to 219 (GKKDEDGALAKDKK) has biased composition (basic and acidic residues).

It belongs to the bacterial ribosomal protein bL25 family. CTC subfamily. As to quaternary structure, part of the 50S ribosomal subunit; part of the 5S rRNA/L5/L18/L25 subcomplex. Contacts the 5S rRNA. Binds to the 5S rRNA independently of L5 and L18.

Its function is as follows. This is one of the proteins that binds to the 5S RNA in the ribosome where it forms part of the central protuberance. This is Large ribosomal subunit protein bL25 from Elusimicrobium minutum (strain Pei191).